The primary structure comprises 438 residues: MYLLPLTLFLTAAFGVSIPRSPLIPGAQIVPASSTADLRAIGAQHHKYPDRETVTIRASRNALDDVSSDFLWGLKQANHGGRLLLKQGETYVIGKKLDLTFLDNIEVQLEGEIQFTNNITYWQANNFYYDFQKSITFWRWGGQDIKIFGSGVLNGNGQKWYDEFAGKQILVYNTFYRPILFLTDNATRISVEGITQLNSPCWTNFFVRTNDVSFDNVYIHAFSTNASSDPANTDGMDSLDVDGVSFTNMRIDVGDDCFSPKPNTTNIFVQNMWCNNTHGVSMGSIGQYAGEMDIIENVYIENVTLLNGQNGARLKAWAGQDVGYGRINNVTYKNIQIQNTDAPIVLDQCYFDINATECAKYPSAVNITNILFENIWGSSSGKDGKIVADLVCSPDAVCTNITLSNVNLTSPKGTAEIVCDDIQGGIGVDCVSDESVTR.

The first 15 residues, 1 to 15, serve as a signal peptide directing secretion; that stretch reads MYLLPLTLFLTAAFG. N-linked (GlcNAc...) asparagine glycans are attached at residues N118, N185, and N225. A PbH1 1 repeat occupies 209 to 248; sequence TNDVSFDNVYIHAFSTNASSDPANTDGMDSLDVDGVSFTN. D255 serves as the catalytic Proton donor. Residues C257 and C274 are joined by a disulfide bond. N-linked (GlcNAc...) asparagine glycans are attached at residues N263 and N275. Residue H278 is part of the active site. 2 PbH1 repeats span residues 295–316 and 327–348; these read IENV…RLKA and INNV…VLDQ. N302, N329, N354, and N366 each carry an N-linked (GlcNAc...) asparagine glycan. An intrachain disulfide couples C392 to C398. Residues 398 to 430 form a PbH1 4 repeat; the sequence is CTNITLSNVNLTSPKGTAEIVCDDIQGGIGVDC. N400 and N407 each carry an N-linked (GlcNAc...) asparagine glycan.

It belongs to the glycosyl hydrolase 28 family.

The protein resides in the secreted. It catalyses the reaction [(1-&gt;4)-alpha-D-galacturonosyl](n) + H2O = alpha-D-galacturonate + [(1-&gt;4)-alpha-D-galacturonosyl](n-1). Functionally, specific in hydrolyzing the terminal glycosidic bond of polygalacturonic acid and oligogalacturonates. This Aspergillus niger (strain ATCC MYA-4892 / CBS 513.88 / FGSC A1513) protein is Probable exopolygalacturonase B (pgxB).